Here is a 167-residue protein sequence, read N- to C-terminus: Photosystem I assembly protein Ycf3 (167 aa).

3 TPR repeats span residues 35–68 (AFSY…ETDA), 72–105 (SYIL…NPSL), and 120–153 (GEQA…APTN).

It belongs to the Ycf3 family.

It is found in the plastid. The protein localises to the chloroplast thylakoid membrane. In terms of biological role, essential for the assembly of the photosystem I (PSI) complex. May act as a chaperone-like factor to guide the assembly of the PSI subunits. This chain is Photosystem I assembly protein Ycf3, found in Chlorella vulgaris (Green alga).